A 333-amino-acid chain; its full sequence is Holliday junction branch migration complex subunit RuvB (333 aa).

The interval 1-182 is large ATPase domain (RuvB-L); sequence MDERLVSGSA…FGVISRLEYY (182 aa). ATP-binding positions include Leu-21, Arg-22, Gly-63, Lys-66, Thr-67, Thr-68, 129–131, Arg-172, Tyr-182, and Arg-219; that span reads EDY. Position 67 (Thr-67) interacts with Mg(2+). Residues 183-253 form a small ATPAse domain (RuvB-S) region; it reads QVDQLAQIIE…LAVEALERLQ (71 aa). The segment at 256 to 333 is head domain (RuvB-H); the sequence is RLGLDHIDHK…AHLGMEVPKR (78 aa). Arg-311 and Arg-316 together coordinate DNA.

It belongs to the RuvB family. As to quaternary structure, homohexamer. Forms an RuvA(8)-RuvB(12)-Holliday junction (HJ) complex. HJ DNA is sandwiched between 2 RuvA tetramers; dsDNA enters through RuvA and exits via RuvB. An RuvB hexamer assembles on each DNA strand where it exits the tetramer. Each RuvB hexamer is contacted by two RuvA subunits (via domain III) on 2 adjacent RuvB subunits; this complex drives branch migration. In the full resolvosome a probable DNA-RuvA(4)-RuvB(12)-RuvC(2) complex forms which resolves the HJ.

It is found in the cytoplasm. It carries out the reaction ATP + H2O = ADP + phosphate + H(+). Its function is as follows. The RuvA-RuvB-RuvC complex processes Holliday junction (HJ) DNA during genetic recombination and DNA repair, while the RuvA-RuvB complex plays an important role in the rescue of blocked DNA replication forks via replication fork reversal (RFR). RuvA specifically binds to HJ cruciform DNA, conferring on it an open structure. The RuvB hexamer acts as an ATP-dependent pump, pulling dsDNA into and through the RuvAB complex. RuvB forms 2 homohexamers on either side of HJ DNA bound by 1 or 2 RuvA tetramers; 4 subunits per hexamer contact DNA at a time. Coordinated motions by a converter formed by DNA-disengaged RuvB subunits stimulates ATP hydrolysis and nucleotide exchange. Immobilization of the converter enables RuvB to convert the ATP-contained energy into a lever motion, pulling 2 nucleotides of DNA out of the RuvA tetramer per ATP hydrolyzed, thus driving DNA branch migration. The RuvB motors rotate together with the DNA substrate, which together with the progressing nucleotide cycle form the mechanistic basis for DNA recombination by continuous HJ branch migration. Branch migration allows RuvC to scan DNA until it finds its consensus sequence, where it cleaves and resolves cruciform DNA. The polypeptide is Holliday junction branch migration complex subunit RuvB (Geobacillus thermodenitrificans (strain NG80-2)).